The sequence spans 117 residues: Small ribosomal subunit protein uS13 (117 aa).

Residues 94-117 (SLPLRGQRTKTNARTRKGPRRLIK) are disordered.

This sequence belongs to the universal ribosomal protein uS13 family. As to quaternary structure, part of the 30S ribosomal subunit. Forms a loose heterodimer with protein S19. Forms two bridges to the 50S subunit in the 70S ribosome.

Located at the top of the head of the 30S subunit, it contacts several helices of the 16S rRNA. In the 70S ribosome it contacts the 23S rRNA (bridge B1a) and protein L5 of the 50S subunit (bridge B1b), connecting the 2 subunits; these bridges are implicated in subunit movement. Contacts the tRNAs in the A and P-sites. The sequence is that of Small ribosomal subunit protein uS13 from Vesicomyosocius okutanii subsp. Calyptogena okutanii (strain HA).